A 174-amino-acid chain; its full sequence is Dual-action ribosomal maturation protein DarP (174 aa).

Belongs to the DarP family.

The protein localises to the cytoplasm. In terms of biological role, member of a network of 50S ribosomal subunit biogenesis factors which assembles along the 30S-50S interface, preventing incorrect 23S rRNA structures from forming. Promotes peptidyl transferase center (PTC) maturation. This is Dual-action ribosomal maturation protein DarP from Pseudomonas paraeruginosa (strain DSM 24068 / PA7) (Pseudomonas aeruginosa (strain PA7)).